The following is a 166-amino-acid chain: Phosphopantetheine adenylyltransferase (166 aa).

S11 is a binding site for substrate. Residues 11 to 12 and H19 each bind ATP; that span reads SF. The substrate site is built by K43, A76, and R90. Residues 91 to 93, E101, and 126 to 132 contribute to the ATP site; these read GLR and LQPVSSS.

This sequence belongs to the bacterial CoaD family. As to quaternary structure, homohexamer. The cofactor is Mg(2+).

It localises to the cytoplasm. It carries out the reaction (R)-4'-phosphopantetheine + ATP + H(+) = 3'-dephospho-CoA + diphosphate. It participates in cofactor biosynthesis; coenzyme A biosynthesis; CoA from (R)-pantothenate: step 4/5. Reversibly transfers an adenylyl group from ATP to 4'-phosphopantetheine, yielding dephospho-CoA (dPCoA) and pyrophosphate. The chain is Phosphopantetheine adenylyltransferase from Streptococcus equi subsp. equi (strain 4047).